A 157-amino-acid polypeptide reads, in one-letter code: Sorting nexin-3 (157 aa).

Positions 1-21 (MSKPFQPISDVINTSPKNKSQ) are disordered. A compositionally biased stretch (polar residues) spans 11 to 21 (VINTSPKNKSQ). Positions 32–152 (NFLEIEVKNP…EFIQNEKWDP (121 aa)) constitute a PX domain. A 1,2-diacyl-sn-glycero-3-phospho-(1D-myo-inositol-3-phosphate)-binding residues include Arg-75, Ser-77, Lys-101, and Arg-117.

This sequence belongs to the sorting nexin family.

It localises to the cytoplasm. Its subcellular location is the golgi apparatus membrane. The protein localises to the prevacuolar compartment membrane. In terms of biological role, required for retention of late Golgi membrane proteins. Component of the retrieval machinery that functions by direct interaction with the cytosolic tails of certain TGN membrane proteins during the sorting/budding process at the prevacuolar compartment. Binds phosphatidylinositol 3-phosphate (PtdIns(P3)). The chain is Sorting nexin-3 (SNX3) from Candida albicans (strain SC5314 / ATCC MYA-2876) (Yeast).